We begin with the raw amino-acid sequence, 404 residues long: Phosphopentomutase (404 aa).

Positions 10, 303, 308, 344, 345, and 356 each coordinate Mn(2+).

This sequence belongs to the phosphopentomutase family. It depends on Mn(2+) as a cofactor.

Its subcellular location is the cytoplasm. The catalysed reaction is 2-deoxy-alpha-D-ribose 1-phosphate = 2-deoxy-D-ribose 5-phosphate. The enzyme catalyses alpha-D-ribose 1-phosphate = D-ribose 5-phosphate. Its pathway is carbohydrate degradation; 2-deoxy-D-ribose 1-phosphate degradation; D-glyceraldehyde 3-phosphate and acetaldehyde from 2-deoxy-alpha-D-ribose 1-phosphate: step 1/2. Isomerase that catalyzes the conversion of deoxy-ribose 1-phosphate (dRib-1-P) and ribose 1-phosphate (Rib-1-P) to deoxy-ribose 5-phosphate (dRib-5-P) and ribose 5-phosphate (Rib-5-P), respectively. The chain is Phosphopentomutase from Shewanella sp. (strain W3-18-1).